A 237-amino-acid polypeptide reads, in one-letter code: Segregation and condensation protein A (237 aa).

Belongs to the ScpA family. As to quaternary structure, component of a cohesin-like complex composed of ScpA, ScpB and the Smc homodimer, in which ScpA and ScpB bind to the head domain of Smc. The presence of the three proteins is required for the association of the complex with DNA.

The protein resides in the cytoplasm. Its function is as follows. Participates in chromosomal partition during cell division. May act via the formation of a condensin-like complex containing Smc and ScpB that pull DNA away from mid-cell into both cell halves. The protein is Segregation and condensation protein A of Streptococcus thermophilus (strain ATCC BAA-250 / LMG 18311).